The chain runs to 560 residues: Probable sulfate transporter Rv1739c (560 aa).

The tract at residues 1 to 436 (MIPTMTSAGW…VLGFVPGIAG (436 aa)) is required for sulfate transport in E.coli. A run of 11 helical transmembrane segments spans residues 29–49 (VLAG…YATV), 51–71 (GLPP…YALL), 79–99 (IGPE…MAAG), 105–125 (AVLA…AGTA), 138–158 (VLVG…LGTI), 184–204 (WPTF…TRWA), 207–227 (APGP…MSLD), 256–276 (ALII…VLTA), 333–353 (LIAL…LAMF), 355–375 (IAAL…LSEF), and 394–414 (AAVL…LSIL). The STAS domain occupies 442 to 557 (DYPQAKRVPG…MTLPTAVQAF (116 aa)).

Belongs to the SLC26A/SulP transporter (TC 2.A.53) family.

Its subcellular location is the cell membrane. Expression in E.coli induces sulfate uptake during early- to mid-log phase growth. Uptake is maximal at pH 6.0, is sulfate-specific, requires E.coli CysA and the transmembrane segment but not the STAS domain of the protein. The chain is Probable sulfate transporter Rv1739c from Mycobacterium tuberculosis (strain ATCC 25618 / H37Rv).